The following is a 226-amino-acid chain: Leucyl/phenylalanyl-tRNA--protein transferase (226 aa).

This sequence belongs to the L/F-transferase family.

The protein resides in the cytoplasm. The enzyme catalyses N-terminal L-lysyl-[protein] + L-leucyl-tRNA(Leu) = N-terminal L-leucyl-L-lysyl-[protein] + tRNA(Leu) + H(+). It catalyses the reaction N-terminal L-arginyl-[protein] + L-leucyl-tRNA(Leu) = N-terminal L-leucyl-L-arginyl-[protein] + tRNA(Leu) + H(+). It carries out the reaction L-phenylalanyl-tRNA(Phe) + an N-terminal L-alpha-aminoacyl-[protein] = an N-terminal L-phenylalanyl-L-alpha-aminoacyl-[protein] + tRNA(Phe). Functions in the N-end rule pathway of protein degradation where it conjugates Leu, Phe and, less efficiently, Met from aminoacyl-tRNAs to the N-termini of proteins containing an N-terminal arginine or lysine. In Salinibacter ruber (strain DSM 13855 / M31), this protein is Leucyl/phenylalanyl-tRNA--protein transferase.